The primary structure comprises 436 residues: MAPPKLHTLFCLSGFLALVHPFDWRDLDPVTYIQSSVWIQRIQSELLITSFGHTTIPKGNGPYSVGCTDLMSGYTNQSSFLRLYYPSQDNDFPDALWIPNEEYFQGLTETLGASSFLGKLLKLLYGSVKVPAKWNSPLKTGEKYPLIIFSHGLGAFRSIYSAIGIELASHGFIVAAVEHRDESAAATYYFQDAPAAESGNRSWIYYKVGNLETEERKRQLRQRGEECSQALSWLLSIDEGEPVKNVLDLNFDIQQLKGSLDRSKVAIIGHSFGGATVIQTLSEDQRFRCGIALDPWMFPVGEDVHSKIPQPLFFINSEYFQSANDTKKIEKFYQPQKERKMIAVKGSVHHNFVDFTFATGKIIGQMLSLKGKIDSEVAMDLINKASLAFLQKYLGLDKNFDQWNSLMEGDDENLIPEFTIPTTMQSSTGTEQRNPD.

The first 21 residues, 1 to 21, serve as a signal peptide directing secretion; the sequence is MAPPKLHTLFCLSGFLALVHP. 2 N-linked (GlcNAc...) asparagine glycosylation sites follow: Asn-76 and Asn-200. Ser-271 functions as the Nucleophile in the catalytic mechanism. The active-site Charge relay system is Asp-294. An N-linked (GlcNAc...) asparagine glycan is attached at Asn-324. Catalysis depends on His-349, which acts as the Charge relay system.

Belongs to the AB hydrolase superfamily. Lipase family. N-glycosylated. Plasma.

It is found in the secreted. The protein resides in the extracellular space. It carries out the reaction a 1-O-alkyl-2-acetyl-sn-glycero-3-phosphocholine + H2O = a 1-O-alkyl-sn-glycero-3-phosphocholine + acetate + H(+). It catalyses the reaction 1-O-decyl-2-acetyl-sn-glycero-3-phosphocholine + H2O = 1-O-decyl-sn-glycero-3-phosphocholine + acetate + H(+). The enzyme catalyses 1-O-dodecyl-2-acetyl-sn-glycero-3-phosphocholine + H2O = 1-O-dodecyl-sn-glycero-3-phosphocholine + acetate + H(+). The catalysed reaction is 1-O-tetradecyl-2-acetyl-sn-glycero-3-phosphocholine + H2O = 1-O-tetradecyl-sn-glycero-3-phosphocholine + acetate + H(+). It carries out the reaction 1-O-hexadecyl-2-acetyl-sn-glycero-3-phosphocholine + H2O = 1-O-hexadecyl-sn-glycero-3-phosphocholine + acetate + H(+). It catalyses the reaction 1-O-octadecyl-2-acetyl-sn-glycero-3-phosphocholine + H2O = 1-O-octadecyl-sn-glycero-3-phosphocholine + acetate + H(+). The enzyme catalyses 1-hexadecanoyl-2-acetyl-sn-glycero-3-phosphocholine + H2O = 1-hexadecanoyl-sn-glycero-3-phosphocholine + acetate + H(+). The catalysed reaction is 1-hexadecanoyl-2-propionyl-sn-glycero-3-phosphocholine + H2O = propanoate + 1-hexadecanoyl-sn-glycero-3-phosphocholine + H(+). It carries out the reaction 1-hexadecanoyl-2-butanoyl-sn-glycero-3-phosphocholine + H2O = butanoate + 1-hexadecanoyl-sn-glycero-3-phosphocholine + H(+). It catalyses the reaction 1-hexadecanoyl-2-pentanoyl-sn-glycero-3-phosphocholine + H2O = pentanoate + 1-hexadecanoyl-sn-glycero-3-phosphocholine + H(+). The enzyme catalyses 1-hexadecanoyl-2-glutaroyl-sn-glycero-3-phosphocholine + H2O = glutarate + 1-hexadecanoyl-sn-glycero-3-phosphocholine + H(+). The catalysed reaction is 1-hexadecanoyl-2-(5-oxopentanoyl)-sn-glycero-3-phosphocholine + H2O = 5-oxopentanoate + 1-hexadecanoyl-sn-glycero-3-phosphocholine + H(+). It carries out the reaction 1-hexadecanoyl-2-(9-oxononanoyl)-sn-glycero-3-phosphocholine + H2O = 9-oxononanoate + 1-hexadecanoyl-sn-glycero-3-phosphocholine + H(+). It catalyses the reaction 1-hexadecanoyl-2-[9-hydroperoxy-(10E-octadecenoyl)]-sn-glycero-3-phosphocholine + H2O = 9-hydroperoxy-10E-octadecenoate + 1-hexadecanoyl-sn-glycero-3-phosphocholine + H(+). The enzyme catalyses 1-hexadecanoyl-2-(10-hydroperoxy-8E-octadecenoyl)-sn-glycero-3-phosphocholine + H2O = 10-hydroperoxy-(8E)-octadecenoate + 1-hexadecanoyl-sn-glycero-3-phosphocholine + H(+). Lipoprotein-associated calcium-independent phospholipase A2 involved in phospholipid catabolism during inflammatory and oxidative stress response. At the lipid-aqueous interface, hydrolyzes the ester bond of fatty acyl group attached at sn-2 position of phospholipids (phospholipase A2 activity). Specifically targets phospholipids with a short-chain fatty acyl group at sn-2 position. Can hydrolyze phospholipids with long fatty acyl chains, only if they carry oxidized functional groups. Hydrolyzes and inactivates platelet-activating factor (PAF, 1-O-alkyl-2-acetyl-sn-glycero-3-phosphocholine), a potent pro-inflammatory signaling lipid that acts through PTAFR on various innate immune cells. Hydrolyzes oxidatively truncated phospholipids carrying an aldehyde group at omega position, preventing their accumulation in lipoprotein particles and uncontrolled pro-inflammatory effects. As part of high-density lipoprotein (HDL) particles, can hydrolyze phospholipids having long-chain fatty acyl hydroperoxides at sn-2 position and protect against potential accumulation of these oxylipins in the vascular wall. Catalyzes the release from membrane phospholipids of F2-isoprostanes, lipid biomarkers of cellular oxidative damage. This is Platelet-activating factor acetylhydrolase (PLA2G7) from Cavia porcellus (Guinea pig).